The chain runs to 421 residues: uncharacterized protein (421 aa).

Coiled-coil stretches lie at residues 126–182 (YART…IQKI) and 328–397 (YQVE…RLTL).

This is an uncharacterized protein from Treponema pallidum (strain Nichols).